A 346-amino-acid chain; its full sequence is Inositol 2-dehydrogenase/D-chiro-inositol 3-dehydrogenase (346 aa).

Over residues 322 to 331 (GREESIELPK) the composition is skewed to basic and acidic residues. A disordered region spans residues 322–346 (GREESIELPKKPAFYQHSAATPEQV).

This sequence belongs to the Gfo/Idh/MocA family. Homotetramer.

It carries out the reaction myo-inositol + NAD(+) = scyllo-inosose + NADH + H(+). It catalyses the reaction 1D-chiro-inositol + NAD(+) = scyllo-inosine + NADH + H(+). Its pathway is polyol metabolism; myo-inositol degradation into acetyl-CoA; acetyl-CoA from myo-inositol: step 1/7. In terms of biological role, involved in the oxidation of myo-inositol (MI) and D-chiro-inositol (DCI) to 2-keto-myo-inositol (2KMI or 2-inosose) and 1-keto-D-chiro-inositol (1KDCI), respectively. This chain is Inositol 2-dehydrogenase/D-chiro-inositol 3-dehydrogenase, found in Shouchella clausii (strain KSM-K16) (Alkalihalobacillus clausii).